Consider the following 333-residue polypeptide: Peroxisome biogenesis protein 2 (333 aa).

Residues 1-38 are Peroxisomal matrix-facing; the sequence is MTPSTPADDAWIRSYQRLLPESQSLLASRRSVIPVAIS. The helical transmembrane segment at 39 to 65 threads the bilayer; that stretch reads RVNQFDAARLDVEMSAMLKEQLVKVFT. At 66–71 the chain is on the cytoplasmic side; sequence LMKPGM. Residues 72–97 traverse the membrane as a helical segment; that stretch reads LFQYEPELDAFLEFLIWRFSIWVDKP. Residues 98–131 are Peroxisomal matrix-facing; sequence TPGNALMNLRYRDERGVVAQHLGKVRTGLEGPGL. The helical transmembrane segment at 132–158 threads the bilayer; that stretch reads TSPQKIWYCVASVGGQYLFSRLQSFSA. At 159–168 the chain is on the cytoplasmic side; the sequence is FRRWGDSEQR. The chain crosses the membrane as a helical span at residues 169–199; sequence PLARRLWTLVQRIEGIYKAASFLNLLSFLYT. The Peroxisomal matrix segment spans residues 200-226; sequence GRYRNLIEKALKARLVYRSPHMNRSVS. Residues 227 to 250 form a helical membrane-spanning segment; sequence FEYMNRQLVWNEFSEMLLLLLPLL. Over 251-333 the chain is Cytoplasmic; it reads NSSAVKNILS…IQREGVSSGK (83 aa). 8 residues coordinate Zn(2+): C277, C280, C293, H295, C298, C301, C314, and C317. Residues 277-318 form an RING-type zinc finger; sequence CPICQVDPAIPFIALPCQHRYCYYCIRTRCASAASFRCLRCN.

This sequence belongs to the pex2/pex10/pex12 family. As to quaternary structure, component of the PEX2-PEX10-PEX12 retrotranslocation channel. Interacts with DSK2a and DSK2b. Expressed in roots, stems, leaves, flowers, pollen, ovules, seeds and siliques.

It localises to the peroxisome membrane. It catalyses the reaction [E2 ubiquitin-conjugating enzyme]-S-ubiquitinyl-L-cysteine + [acceptor protein]-L-cysteine = [E2 ubiquitin-conjugating enzyme]-L-cysteine + [acceptor protein]-S-ubiquitinyl-L-cysteine.. It functions in the pathway protein modification; protein ubiquitination. Functionally, E3 ubiquitin-protein ligase component of a retrotranslocation channel required for peroxisome organization by mediating export of the PEX5 receptor from peroxisomes to the cytosol, thereby promoting PEX5 recycling. The retrotranslocation channel is composed of PEX2, PEX10 and PEX12; each subunit contributing transmembrane segments that coassemble into an open channel that specifically allows the passage of PEX5 through the peroxisomal membrane. PEX2 also regulates peroxisome organization by acting as a E3 ubiquitin-protein ligase. PEX2 ubiquitinates PEX5 during its passage through the retrotranslocation channel: catalyzes monoubiquitination of PEX5 at 'Cys-6', a modification that acts as a signal for PEX5 extraction into the cytosol. This Arabidopsis thaliana (Mouse-ear cress) protein is Peroxisome biogenesis protein 2 (PEX2).